The primary structure comprises 208 residues: FMN-dependent NADH:quinone oxidoreductase 1 (208 aa).

The protein belongs to the azoreductase type 1 family. Homodimer. Requires FMN as cofactor.

The enzyme catalyses 2 a quinone + NADH + H(+) = 2 a 1,4-benzosemiquinone + NAD(+). It catalyses the reaction N,N-dimethyl-1,4-phenylenediamine + anthranilate + 2 NAD(+) = 2-(4-dimethylaminophenyl)diazenylbenzoate + 2 NADH + 2 H(+). In terms of biological role, quinone reductase that provides resistance to thiol-specific stress caused by electrophilic quinones. Functionally, also exhibits azoreductase activity. Catalyzes the reductive cleavage of the azo bond in aromatic azo compounds to the corresponding amines. This Bacillus licheniformis (strain ATCC 14580 / DSM 13 / JCM 2505 / CCUG 7422 / NBRC 12200 / NCIMB 9375 / NCTC 10341 / NRRL NRS-1264 / Gibson 46) protein is FMN-dependent NADH:quinone oxidoreductase 1.